Here is a 967-residue protein sequence, read N- to C-terminus: Sodium/potassium exporting P-type ATPase 1 (967 aa).

Residues 1 to 70 lie on the Cytoplasmic side of the membrane; it reads MEGSGDKRHE…GVNPWKILLR (70 aa). A helical membrane pass occupies residues 71–91; that stretch reads QVSNGLTAVLVVAMVVSFAVK. Residue Asp92 is a topological domain, extracellular. The chain crosses the membrane as a helical span at residues 93–113; the sequence is YAEAGVLVIVIAFNTIVGFVQ. Residues 114–254 lie on the Cytoplasmic side of the membrane; sequence EYRAEKTMDA…TQSTPMQRKL (141 aa). A helical transmembrane segment spans residues 255–275; it reads NLMAYMLLAFALLLALIVFAV. Residues 276–283 are Extracellular-facing; sequence NKFNFSTE. Asn279 is a glycosylation site (N-linked (GlcNAc...) asparagine). Residues 284-304 traverse the membrane as a helical segment; sequence VVIYAIALSIAIIPEGLIAVI. Over 305–732 the chain is Cytoplasmic; sequence TIVQALGVRR…GRRIFSNIKK (428 aa). Asp340 serves as the catalytic 4-aspartylphosphate intermediate. Positions 340 and 342 each coordinate Mg(2+). ATP contacts are provided by Thr342, Glu425, Lys478, Arg523, Thr587, Gly588, Asp589, Arg651, and Lys657. Asp676 serves as a coordination point for Mg(2+). Asn679 contacts ATP. A helical membrane pass occupies residues 733 to 753; the sequence is FVLHLLSTNVGQVIVLLIGLA. Topologically, residues 754-812 are extracellular; the sequence is FKDRTGTSVFPLSPVQILFLNLVTGTPPAMALGIEPASSSVMQVPPHVKGLFTVELIMD. The helical transmembrane segment at 813–833 threads the bilayer; it reads IFIFGTFIGILALASWVLVIY. Residues 834–900 are Cytoplasmic-facing; the sequence is PFGNSDLATL…GGASRFFSNK (67 aa). A helical membrane pass occupies residues 901-921; sequence VLVASVFIGALLPIPTIYIGT. At 922–931 the chain is on the extracellular side; sequence LNTEVFKQEG. A helical transmembrane segment spans residues 932–952; that stretch reads ITWEWIIVIVSVFVFFLLSEF. Residues 953-967 lie on the Cytoplasmic side of the membrane; it reads YKLLKRRFIKTPYNM.

The protein belongs to the cation transport ATPase (P-type) (TC 3.A.3) family. Type IID subfamily. Mg(2+) serves as cofactor. Post-translationally, the active site is phosphorylated in presence of sodium or potassium and in conditions of higher pH. Not phosphorylated in presence of calcium ions.

Its subcellular location is the cell membrane. It catalyses the reaction Na(+)(in) + ATP + H2O = Na(+)(out) + ADP + phosphate + H(+). The catalysed reaction is K(+)(in) + ATP + H2O = K(+)(out) + ADP + phosphate + H(+). In terms of biological role, catalyzes the hydrolysis of ATP coupled with the export of sodium and potassium from the cell. May pump potassium inefficiently. May transport other cations such as lithium. Sodium/potassium efflux ATPases are involved in salt tolerance and maintaining the membrane potential across the plasma membrane in high salinity (Na+) or alkaline (K+) environments. The polypeptide is Sodium/potassium exporting P-type ATPase 1 (Physcomitrium patens (Spreading-leaved earth moss)).